Reading from the N-terminus, the 55-residue chain is Large ribosomal subunit protein bL32 (55 aa).

Positions 1–27 are disordered; it reads MAVQQNKPTRSKRGMRRSHDALTTATL.

It belongs to the bacterial ribosomal protein bL32 family.

The chain is Large ribosomal subunit protein bL32 from Yersinia enterocolitica serotype O:8 / biotype 1B (strain NCTC 13174 / 8081).